Here is a 117-residue protein sequence, read N- to C-terminus: Large ribosomal subunit protein uL18 (117 aa).

Belongs to the universal ribosomal protein uL18 family. Part of the 50S ribosomal subunit; part of the 5S rRNA/L5/L18/L25 subcomplex. Contacts the 5S and 23S rRNAs.

This is one of the proteins that bind and probably mediate the attachment of the 5S RNA into the large ribosomal subunit, where it forms part of the central protuberance. This Halorhodospira halophila (strain DSM 244 / SL1) (Ectothiorhodospira halophila (strain DSM 244 / SL1)) protein is Large ribosomal subunit protein uL18.